Reading from the N-terminus, the 1449-residue chain is Actin cytoskeleton-regulatory complex protein PAN1 (1449 aa).

Composition is skewed to low complexity over residues 1–18 (MYNP…QQQQ) and 27–36 (QQQQYVQPQQ). Residues 1-86 (MYNPYQQQQA…AQQPSIQPQQ (86 aa)) are disordered. Over residues 49 to 86 (PNQATGFYQPQQQGMFNASSFQNQPTGFAQQPSIQPQQ) the composition is skewed to polar residues. The region spanning 128–217 (DQSKFEHLFR…EKWSNEVKSF (90 aa)) is the EH 1 domain. The EF-hand 1 domain occupies 161-196 (LQPITLAEIWSLADTNKSGSLLFPEFALALHLCNLS). 4 stretches are compositionally biased toward polar residues: residues 239 to 249 (ASSGASSNPIN), 258 to 275 (TGFN…QAQP), 296 to 306 (QQATGFGSNNV), and 323 to 353 (QPQQ…NPHQ). Disordered stretches follow at residues 239-366 (ASSG…STGF) and 386-427 (TTGF…GKPG). The segment covering 386–397 (TTGFQPQSTGFQ) has biased composition (low complexity). The span at 398–422 (PQSTGFQPQSTGFQPQQTGPLQAQP) shows a compositional bias: polar residues. The region spanning 480 to 569 (EKQIYDGVFS…PELVPPSTKH (90 aa)) is the EH 2 domain. One can recognise an EF-hand 2 domain in the interval 513–548 (LARPDLESIWNLADTNNRGKLNKDEFAVAMHLVYRR). The span at 579 to 588 (NSLKSGSAKS) shows a compositional bias: polar residues. Disordered stretches follow at residues 579-638 (NSLK…SHNS), 877-935 (NSSK…PEER), and 956-1418 (LTRH…DIGA). Basic and acidic residues predominate over residues 595 to 606 (GKTDGKRYKNDD). The span at 878–888 (SSKPKQQSSSQ) shows a compositional bias: low complexity. Polar residues-rich tracts occupy residues 889-907 (VNST…SNNV), 914-926 (PQVT…STAS), and 959-986 (HMTS…SETS). Composition is skewed to low complexity over residues 996-1009 (QPEY…QQQQ) and 1016-1026 (RQQSQQEAQLQ). Over residues 1027 to 1036 (DKGTNGQPDS) the composition is skewed to polar residues. Over residues 1048–1058 (MDNESDDDNEE) the composition is skewed to acidic residues. Residues 1050–1108 (NESDDDNEEYVALMKKKEEMEARERKRKLKKKQDKEARLEKLKREMEELKKKEEAGDSS) adopt a coiled-coil conformation. Basic and acidic residues-rich tracts occupy residues 1064 to 1073 (KKKEEMEARE) and 1082 to 1104 (QDKE…KEEA). Residues 1105 to 1114 (GDSSDDEEPI) are compositionally biased toward acidic residues. Composition is skewed to low complexity over residues 1118-1134 (ASYG…TTKS) and 1174-1185 (NNSSTPGSNNGS). The segment covering 1192–1203 (KPEKEVKLDPKK) has biased composition (basic and acidic residues). A compositionally biased stretch (acidic residues) spans 1219 to 1231 (DWSDEEENSSEDE). Over residues 1253–1263 (VPKSSTVTPNQ) the composition is skewed to polar residues. Residues 1264 to 1283 (EFHDAEDIPHFDSQESKENN) show a composition bias toward basic and acidic residues. Polar residues predominate over residues 1284–1295 (NGEYTSQPTSVI). A compositionally biased stretch (pro residues) spans 1325 to 1395 (FTPPPPPPPS…PPPRGAPPLP (71 aa)). One can recognise a WH2 domain in the interval 1415–1432 (DIGALLGQIKTGSSLKKV).

This sequence belongs to the PAN1 family. In terms of assembly, component of the PAN1 actin cytoskeleton-regulatory complex.

It is found in the cell membrane. The protein localises to the endosome membrane. Its subcellular location is the cytoplasm. The protein resides in the cytoskeleton. It localises to the actin patch. In terms of biological role, component of the PAN1 actin cytoskeleton-regulatory complex required for the internalization of endosomes during actin-coupled endocytosis. The complex links the site of endocytosis to the cell membrane-associated actin cytoskeleton. Mediates uptake of external molecules and vacuolar degradation of plasma membrane proteins. Plays a role in the proper organization of the cell membrane-associated actin cytoskeleton and promotes its destabilization. This is Actin cytoskeleton-regulatory complex protein PAN1 (PAN1) from Debaryomyces hansenii (strain ATCC 36239 / CBS 767 / BCRC 21394 / JCM 1990 / NBRC 0083 / IGC 2968) (Yeast).